A 155-amino-acid chain; its full sequence is Small ribosomal subunit protein uS7 (155 aa).

It belongs to the universal ribosomal protein uS7 family. Part of the 30S ribosomal subunit. Contacts proteins S9 and S11.

In terms of biological role, one of the primary rRNA binding proteins, it binds directly to 16S rRNA where it nucleates assembly of the head domain of the 30S subunit. Is located at the subunit interface close to the decoding center, probably blocks exit of the E-site tRNA. This Pelodictyon phaeoclathratiforme (strain DSM 5477 / BU-1) protein is Small ribosomal subunit protein uS7.